Here is a 376-residue protein sequence, read N- to C-terminus: 3-aminomethylindole N-methyltransferase (376 aa).

4 residues coordinate S-adenosyl-L-homocysteine: Gly220, Asp243, Asp263, and Met264.

The protein belongs to the class I-like SAM-binding methyltransferase superfamily. Cation-independent O-methyltransferase family. In terms of tissue distribution, more present in the fifth leaf than in the second leaf (at protein level).

The enzyme catalyses 3-(aminomethyl)indole + 2 S-adenosyl-L-methionine = gramine + 2 S-adenosyl-L-homocysteine + 2 H(+). The protein operates within alkaloid biosynthesis. With respect to regulation, repressed by sodium carbonate, sodium bicarbonate and K-phosphate. Its function is as follows. Methylates 3-aminomethylindole (AMI) and N-methyl-3-aminomethylindole (MAMI), two substrates involved in gramine biosynthesis, a toxic indole alkaloid. Can use S-adenosyl-L-methionine (AdoMet) as a methyl donor. Unable to mediate caffeic acid O-methylation. The chain is 3-aminomethylindole N-methyltransferase from Hordeum vulgare subsp. vulgare (Domesticated barley).